A 1363-amino-acid chain; its full sequence is DNA-directed RNA polymerase subunit beta' (1363 aa).

Residues 1–39 (MTSTPSKSRKSSKGSKAAKAAASAPETRPLAKTPPPFRN) are disordered. The span at 14–24 (GSKAAKAAASA) shows a compositional bias: low complexity. Zn(2+) is bound by residues C248, C315, C322, and C325.

It belongs to the RNA polymerase beta' chain family. RpoC2 subfamily. In terms of assembly, in cyanobacteria the RNAP catalytic core is composed of 2 alpha, 1 beta, 1 beta', 1 gamma and 1 omega subunit. When a sigma factor is associated with the core the holoenzyme is formed, which can initiate transcription. Zn(2+) is required as a cofactor.

The enzyme catalyses RNA(n) + a ribonucleoside 5'-triphosphate = RNA(n+1) + diphosphate. Its function is as follows. DNA-dependent RNA polymerase catalyzes the transcription of DNA into RNA using the four ribonucleoside triphosphates as substrates. The sequence is that of DNA-directed RNA polymerase subunit beta' from Synechococcus sp. (strain WH7803).